Here is a 610-residue protein sequence, read N- to C-terminus: DNA mismatch repair protein MutL (610 aa).

This sequence belongs to the DNA mismatch repair MutL/HexB family.

Its function is as follows. This protein is involved in the repair of mismatches in DNA. It is required for dam-dependent methyl-directed DNA mismatch repair. May act as a 'molecular matchmaker', a protein that promotes the formation of a stable complex between two or more DNA-binding proteins in an ATP-dependent manner without itself being part of a final effector complex. This chain is DNA mismatch repair protein MutL, found in Rickettsia rickettsii (strain Sheila Smith).